The chain runs to 238 residues: Nucleoside diphosphate kinase III, chloroplastic/mitochondrial (238 aa).

The transit peptide at 1–85 directs the protein to the chloroplast and mitochondrion; that stretch reads MSSQICRSAS…YMIQDQEVLA (85 aa). The ATP site is built by lysine 96, phenylalanine 144, arginine 172, threonine 178, arginine 189, and asparagine 199. Catalysis depends on histidine 202, which acts as the Pros-phosphohistidine intermediate.

The protein belongs to the NDK family. As to quaternary structure, homohexamer. It depends on Mg(2+) as a cofactor.

Its subcellular location is the plastid. The protein localises to the chloroplast thylakoid lumen. The protein resides in the mitochondrion intermembrane space. It catalyses the reaction a 2'-deoxyribonucleoside 5'-diphosphate + ATP = a 2'-deoxyribonucleoside 5'-triphosphate + ADP. It carries out the reaction a ribonucleoside 5'-diphosphate + ATP = a ribonucleoside 5'-triphosphate + ADP. Functionally, major role in the synthesis of nucleoside triphosphates other than ATP. The ATP gamma phosphate is transferred to the NDP beta phosphate via a ping-pong mechanism, using a phosphorylated active-site intermediate. Shows the highest specificity towards GDP. This is Nucleoside diphosphate kinase III, chloroplastic/mitochondrial (NDPK3) from Arabidopsis thaliana (Mouse-ear cress).